The sequence spans 200 residues: Recombination protein RecR (200 aa).

Residues 57 to 72 form a C4-type zinc finger; the sequence is CQECRTFTEQDVCHIC. Residues 81 to 176 enclose the Toprim domain; sequence GQLCVVESPA…TASRIAHGVP (96 aa).

This sequence belongs to the RecR family.

Its function is as follows. May play a role in DNA repair. It seems to be involved in an RecBC-independent recombinational process of DNA repair. It may act with RecF and RecO. This is Recombination protein RecR from Vibrio cholerae serotype O1 (strain ATCC 39541 / Classical Ogawa 395 / O395).